Reading from the N-terminus, the 448-residue chain is uncharacterized protein (448 aa).

12 helical membrane-spanning segments follow: residues 14–34 (PFII…YGII), 59–79 (TLLA…GFLA), 87–107 (VPML…TFGN), 120–140 (GLSA…VVGA), 148–168 (GGIF…GGIV), 171–191 (SLGY…DIAL), 250–270 (IFGP…FDAT), 288–308 (LMFG…GAMV), 316–333 (IGKR…LLCI), 338–358 (TSLN…VLAF), 392–412 (FSAY…VAGF), and 417–437 (FNFI…SLMA).

Belongs to the major facilitator superfamily. TCR/Tet family.

Its subcellular location is the endoplasmic reticulum. It is found in the membrane. This is an uncharacterized protein from Schizosaccharomyces pombe (strain 972 / ATCC 24843) (Fission yeast).